Here is a 167-residue protein sequence, read N- to C-terminus: ATP synthase subunit b (167 aa).

A helical membrane pass occupies residues 8–28 (AEAEFWVGAGLLIFLGIVFFG).

It belongs to the ATPase B chain family. As to quaternary structure, F-type ATPases have 2 components, F(1) - the catalytic core - and F(0) - the membrane proton channel. F(1) has five subunits: alpha(3), beta(3), gamma(1), delta(1), epsilon(1). F(0) has three main subunits: a(1), b(2) and c(10-14). The alpha and beta chains form an alternating ring which encloses part of the gamma chain. F(1) is attached to F(0) by a central stalk formed by the gamma and epsilon chains, while a peripheral stalk is formed by the delta and b chains.

The protein resides in the cell inner membrane. Its function is as follows. F(1)F(0) ATP synthase produces ATP from ADP in the presence of a proton or sodium gradient. F-type ATPases consist of two structural domains, F(1) containing the extramembraneous catalytic core and F(0) containing the membrane proton channel, linked together by a central stalk and a peripheral stalk. During catalysis, ATP synthesis in the catalytic domain of F(1) is coupled via a rotary mechanism of the central stalk subunits to proton translocation. Functionally, component of the F(0) channel, it forms part of the peripheral stalk, linking F(1) to F(0). The polypeptide is ATP synthase subunit b (Phenylobacterium zucineum (strain HLK1)).